Reading from the N-terminus, the 460-residue chain is Cobyrinate a,c-diamide synthase (460 aa).

Positions 248–440 (KIAVARDAAF…THFHFGSSTK (193 aa)) constitute a GATase cobBQ-type domain. The active-site Nucleophile is the Cys331.

This sequence belongs to the CobB/CbiA family. The cofactor is Mg(2+).

It catalyses the reaction cob(II)yrinate + 2 L-glutamine + 2 ATP + 2 H2O = cob(II)yrinate a,c diamide + 2 L-glutamate + 2 ADP + 2 phosphate + 2 H(+). The protein operates within cofactor biosynthesis; adenosylcobalamin biosynthesis; cob(II)yrinate a,c-diamide from sirohydrochlorin (anaerobic route): step 10/10. Catalyzes the ATP-dependent amidation of the two carboxylate groups at positions a and c of cobyrinate, using either L-glutamine or ammonia as the nitrogen source. This Priestia megaterium (Bacillus megaterium) protein is Cobyrinate a,c-diamide synthase.